The chain runs to 288 residues: Eukaryotic translation initiation factor 3 subunit G (288 aa).

Disordered regions lie at residues 1 to 33 (MSKLGNRADWADDEEFDDPSALPPQQITTNKDG) and 156 to 197 (DEPT…GGER). Residues 208-286 (ATLRVTNVSE…LILRVEFAKR (79 aa)) form the RRM domain.

It belongs to the eIF-3 subunit G family. Component of the eukaryotic translation initiation factor 3 (eIF-3) complex.

The protein localises to the cytoplasm. In terms of biological role, RNA-binding component of the eukaryotic translation initiation factor 3 (eIF-3) complex, which is involved in protein synthesis of a specialized repertoire of mRNAs and, together with other initiation factors, stimulates binding of mRNA and methionyl-tRNAi to the 40S ribosome. The eIF-3 complex specifically targets and initiates translation of a subset of mRNAs involved in cell proliferation. This subunit can bind 18S rRNA. The chain is Eukaryotic translation initiation factor 3 subunit G (tif35) from Aspergillus niger (strain ATCC MYA-4892 / CBS 513.88 / FGSC A1513).